A 248-amino-acid chain; its full sequence is 1-(5-phosphoribosyl)-5-[(5-phosphoribosylamino)methylideneamino] imidazole-4-carboxamide isomerase (248 aa).

The active-site Proton acceptor is the aspartate 8. Aspartate 130 (proton donor) is an active-site residue.

Belongs to the HisA/HisF family.

Its subcellular location is the cytoplasm. The enzyme catalyses 1-(5-phospho-beta-D-ribosyl)-5-[(5-phospho-beta-D-ribosylamino)methylideneamino]imidazole-4-carboxamide = 5-[(5-phospho-1-deoxy-D-ribulos-1-ylimino)methylamino]-1-(5-phospho-beta-D-ribosyl)imidazole-4-carboxamide. It functions in the pathway amino-acid biosynthesis; L-histidine biosynthesis; L-histidine from 5-phospho-alpha-D-ribose 1-diphosphate: step 4/9. The chain is 1-(5-phosphoribosyl)-5-[(5-phosphoribosylamino)methylideneamino] imidazole-4-carboxamide isomerase from Alkalilimnicola ehrlichii (strain ATCC BAA-1101 / DSM 17681 / MLHE-1).